The chain runs to 143 residues: MLVLRNLLALVTLALLFTLSSAQYTLSVSNSASGSKCTTAVSAKLNACNTGCLNSFNIVESSNGKGLVFKTFINAACSGEYESLSQFTCAANQKIPTTSYIVSCNSTPSSNSTTDSDSSSGSTVMIGLASSLLFAFATLLALF.

Residues 1 to 22 (MLVLRNLLALVTLALLFTLSSA) form the signal peptide. Asn111 is a glycosylation site (N-linked (GlcNAc...) asparagine). A lipid anchor (GPI-like-anchor amidated serine) is attached at Ser118. Positions 119 to 143 (SSGSTVMIGLASSLLFAFATLLALF) are cleaved as a propeptide — removed in mature form.

This sequence belongs to the ponticulin family. In terms of assembly, monomer. In terms of processing, disulfide bond(s) stabilize the native, actin-binding conformation of ponticulin. Post-translationally, the GPI-like-anchor contains a phosphoceramide group, rather than a phosphatidyl group.

The protein resides in the cell membrane. Its function is as follows. Binds F-actin and nucleates actin assembly. Major high affinity link between the plasma membrane and the cortical actin network. The protein is Ponticulin (ponA) of Dictyostelium discoideum (Social amoeba).